Here is a 293-residue protein sequence, read N- to C-terminus: Probable E3 ubiquitin-protein ligase RNF144A-B (293 aa).

Residues 16 to 237 (PLLSCKLCLG…YDKGPCRNKL (222 aa)) form a TRIAD supradomain region. Zn(2+) contacts are provided by C20, C23, C43, C46, C111, C116, C135, C138, C143, C146, H151, C156, C186, and C189. The RING-type 1 zinc finger occupies 20-70 (CKLCLGEFPLEQMTTISQCQCIFCSLCLKQYVELLIKEGLETAISCPDSAC). The IBR-type zinc finger occupies 91–156 (QHYKRLQFER…RADCHTGQAC (66 aa)). The RING-type 2; atypical zinc finger occupies 186-215 (CPKCKVYIERDEGCAQMMCKNCKHAFCWYC). C199 is a catalytic residue. Zn(2+)-binding residues include C204, C207, C212, C215, H227, and C233. A helical transmembrane segment spans residues 251 to 271 (VVGIFAGFGLLLLVASPFLLL).

Belongs to the RBR family. RNF144 subfamily.

Its subcellular location is the membrane. It carries out the reaction [E2 ubiquitin-conjugating enzyme]-S-ubiquitinyl-L-cysteine + [acceptor protein]-L-lysine = [E2 ubiquitin-conjugating enzyme]-L-cysteine + [acceptor protein]-N(6)-ubiquitinyl-L-lysine.. Its pathway is protein modification; protein ubiquitination. Functionally, E3 ubiquitin-protein ligase which accepts ubiquitin from E2 ubiquitin-conjugating enzymes ube2l3 and ube2l6 in the form of a thioester and then directly transfers the ubiquitin to targeted substrates. In Danio rerio (Zebrafish), this protein is Probable E3 ubiquitin-protein ligase RNF144A-B (rnf144ab).